The chain runs to 374 residues: 5-pentadecatrienyl resorcinol O-methyltransferase (374 aa).

S-adenosyl-L-methionine is bound by residues Asp239, Asp261, Met262, and Lys275. His279 serves as the catalytic Proton acceptor.

Belongs to the class I-like SAM-binding methyltransferase superfamily. Cation-independent O-methyltransferase family. COMT subfamily. Homodimer. In terms of tissue distribution, expressed predominantly in root hairs.

The catalysed reaction is (8Z,11Z)-5-(pentadeca-8,11,14-trien-1-yl)resorcinol + S-adenosyl-L-methionine = (8Z,11Z)-5-(pentadeca- 8,11,14-trien-1-yl)resorcinol-3-methyl ether + S-adenosyl-L-homocysteine + H(+). In terms of biological role, O-methyltransferase involved in the biosynthetic pathway of the phytotoxin sorgoleone, a potent broad-spectrum inhibitor active against many agronomically important monocot and dicot weed species. Substrate specificity for alkylresorcinols. Strong preference for a five carbons alkyl side chain. The protein is 5-pentadecatrienyl resorcinol O-methyltransferase (OMT3) of Sorghum bicolor (Sorghum).